A 610-amino-acid chain; its full sequence is F-box/LRR-repeat protein 4 (610 aa).

Positions 5-52 (DRINNCLPEELILEIFRRLESKPNRDACSLVCKRWLSLERFSRTTLRI) constitute an F-box domain. LRR repeat units follow at residues 53–79 (GASFSPDDFISLLSRRFLYITSIHVDE), 124–149 (SSSLTDTGLTALANGFPRIENLSLIW), 150–175 (CPNVSSVGLCSLAQKCTSLKSLDLQG), 178–200 (VGDQGLAAVGKFCKQLEELNLRF), 201–227 (CEGLTDVGVIDLVVGCSKSLKSIGVAA), 228–253 (SAKITDLSLEAVGSHCKLLEVLYLDS), 256–277 (IHDKGLIAVAQGCHRLKNLKLQ), 278–303 (CVSVTDVAFAAVGELCTSLERLALYS), 304–329 (FQHFTDKGMRAIGKGSKKLKDLTLSD), 330–355 (CYFVSCKGLEAIAHGCKELERVEING), 356–381 (CHNIGTRGIEAIGKSCPRLKELALLY), 382–407 (CQRIGNSALQEIGKGCKSLEILHLVD), 408–433 (CSGIGDIAMCSIAKGCRNLKKLHIRR), 434–459 (CYEIGNKGIISIGKHCKSLTELSLRF), 460–484 (CDKVGNKALIAIGKGCSLQQLNVSG), 485–510 (CNQISDAGITAIARGCPQLTHLDISV), 511–536 (LQNIGDMPLAELGEGCPMLKDLVLSH), 537–562 (CHHITDNGLNHLVQKCKLLETCHMVY), and 563–588 (CPGITSAGVATVVSSCPHIKKVLIEK). Residues 88 to 125 (LSPSPKRKRGRDSSSPSSSKRKKLTDKTHSGAENVESS) form a disordered region.

The polypeptide is F-box/LRR-repeat protein 4 (FBL4) (Arabidopsis thaliana (Mouse-ear cress)).